Reading from the N-terminus, the 674-residue chain is CRS2-associated factor 1, chloroplastic (674 aa).

The N-terminal 54 residues, 1 to 54, are a transit peptide targeting the chloroplast; it reads MATARLPSRSFLSPAQQSYPRLPASVRLCLSHHEQPPTGPKRHRRAATSHPAFS. The tract at residues 31–61 is disordered; that stretch reads SHHEQPPTGPKRHRRAATSHPAFSAAARGRA. Positions 48–57 are enriched in low complexity; the sequence is TSHPAFSAAA. 2 consecutive CRM domains span residues 183-279 and 301-397; these read EPLT…TRPC and GGLT…LPPL. The interval 554-576 is CRS2 binding; sequence GLLCLLEQAIHSGRALVLSEDEL.

In terms of assembly, interacts with CRS2 and RNA. Part of large ribonucleo-protein complexes that include group IIB introns, CRS2 and CAF1.

The protein localises to the plastid. It localises to the chloroplast stroma. Functionally, required for the splicing of group IIB introns in chloroplasts. Forms splicing particles with CRS2. Interacts with RNA and confers intron specificity of the splicing particles. The chain is CRS2-associated factor 1, chloroplastic (CAF1) from Zea mays (Maize).